The sequence spans 259 residues: Deoxyribose-phosphate aldolase (259 aa).

Asp102 serves as the catalytic Proton donor/acceptor. Lys167 serves as the catalytic Schiff-base intermediate with acetaldehyde. Lys201 functions as the Proton donor/acceptor in the catalytic mechanism.

It belongs to the DeoC/FbaB aldolase family. DeoC type 2 subfamily.

Its subcellular location is the cytoplasm. The enzyme catalyses 2-deoxy-D-ribose 5-phosphate = D-glyceraldehyde 3-phosphate + acetaldehyde. The protein operates within carbohydrate degradation; 2-deoxy-D-ribose 1-phosphate degradation; D-glyceraldehyde 3-phosphate and acetaldehyde from 2-deoxy-alpha-D-ribose 1-phosphate: step 2/2. In terms of biological role, catalyzes a reversible aldol reaction between acetaldehyde and D-glyceraldehyde 3-phosphate to generate 2-deoxy-D-ribose 5-phosphate. This chain is Deoxyribose-phosphate aldolase, found in Enterobacter sp. (strain 638).